Consider the following 311-residue polypeptide: Aspartate carbamoyltransferase catalytic subunit (311 aa).

Carbamoyl phosphate contacts are provided by arginine 55 and threonine 56. Lysine 85 contacts L-aspartate. Positions 106, 135, and 138 each coordinate carbamoyl phosphate. 2 residues coordinate L-aspartate: arginine 168 and arginine 230. Residues leucine 268 and proline 269 each coordinate carbamoyl phosphate.

The protein belongs to the aspartate/ornithine carbamoyltransferase superfamily. ATCase family. Heterododecamer (2C3:3R2) of six catalytic PyrB chains organized as two trimers (C3), and six regulatory PyrI chains organized as three dimers (R2).

The enzyme catalyses carbamoyl phosphate + L-aspartate = N-carbamoyl-L-aspartate + phosphate + H(+). Its pathway is pyrimidine metabolism; UMP biosynthesis via de novo pathway; (S)-dihydroorotate from bicarbonate: step 2/3. Catalyzes the condensation of carbamoyl phosphate and aspartate to form carbamoyl aspartate and inorganic phosphate, the committed step in the de novo pyrimidine nucleotide biosynthesis pathway. The chain is Aspartate carbamoyltransferase catalytic subunit from Proteus mirabilis (strain HI4320).